Consider the following 334-residue polypeptide: F420-dependent glucose-6-phosphate dehydrogenase (334 aa).

D38 lines the coenzyme F420-(gamma-Glu)n pocket. The active-site Proton donor is H39. Residues T75 and T106 to G107 contribute to the coenzyme F420-(gamma-Glu)n site. Residue E108 is the Proton acceptor of the active site. Coenzyme F420-(gamma-Glu)n contacts are provided by residues N111, G175 to G176, and L178 to V179. Substrate-binding residues include T193, K196, K257, and R281.

Belongs to the F420-dependent glucose-6-phosphate dehydrogenase family. As to quaternary structure, homodimer.

It catalyses the reaction oxidized coenzyme F420-(gamma-L-Glu)(n) + D-glucose 6-phosphate + H(+) = 6-phospho-D-glucono-1,5-lactone + reduced coenzyme F420-(gamma-L-Glu)(n). In terms of biological role, catalyzes the coenzyme F420-dependent oxidation of glucose 6-phosphate (G6P) to 6-phosphogluconolactone. This is F420-dependent glucose-6-phosphate dehydrogenase from Kribbella flavida (strain DSM 17836 / JCM 10339 / NBRC 14399).